The sequence spans 365 residues: Coxsackievirus and adenovirus receptor (365 aa).

Residues 1–19 (MALLLCFVLLCGVVDFARS) form the signal peptide. Ig-like C2-type domains follow at residues 20 to 134 (LSIT…KKIH) and 141 to 228 (PSGA…LRLN). Topologically, residues 20–237 (LSITTPEEMI…NVVPPSNKAG (218 aa)) are extracellular. 2 disulfide bridges follow: Cys-41–Cys-120 and Cys-162–Cys-212. N-linked (GlcNAc...) asparagine glycosylation is found at Asn-106 and Asn-201. Residues 238–258 (LIAGAIIGTLLALALIGLIIF) form a helical membrane-spanning segment. Residues Cys-259 and Cys-260 are each lipidated (S-palmitoyl cysteine). The Cytoplasmic portion of the chain corresponds to 259–365 (CCRKKRREEK…PAQSKDGSIV (107 aa)). A compositionally biased stretch (basic and acidic residues) spans 269–282 (YEKEVHHDIREDVP). The segment at 269–343 (YEKEVHHDIR…TLPPAKVAAP (75 aa)) is disordered. A compositionally biased stretch (polar residues) spans 286 to 322 (SRTSTARSYIGSNHSSLGSMSPSNMEGYSKTQYNQVP). Ser-297, Ser-304, Ser-306, Ser-323, Ser-332, and Ser-363 each carry phosphoserine. Positions 360–365 (KDGSIV) match the PDZ-binding motif.

Monomer. May form homodimer. Interacts with LNX, MAGI1, DLG4, PRKCABP, TJP1 and CTNNB1. Interacts with MPDZ; recruits MPDZ to intercellular contact sites. Interacts with JAML (homodimeric form). Secreted isoform 3, isoform 4 and isoform 5 can interact with the extracellular domain of the receptor. In terms of assembly, (Microbial infection) Interacts with adenovirus subgroups A, C, D, E and F fiber proteins as well as coxsackievirus B1, B2, B3, B4, B5 and B6 capsid proteins. In terms of processing, N-glycosylated. Post-translationally, palmitoylated on Cys-259 and/or Cys-260; required for proper localization to the plasma membrane. In terms of tissue distribution, expressed in pancreas, brain, heart, small intestine, testis, prostate and at a lower level in liver and lung. Isoform 5 is ubiquitously expressed. Isoform 3 is expressed in heart, lung and pancreas. In skeletal muscle, isoform 1 is found at the neuromuscular junction and isoform 2 is found in blood vessels. In cardiac muscle, isoform 1 and isoform 2 are found at intercalated disks. In heart expressed in subendothelial layers of the vessel wall but not in the luminal endothelial surface. Expression is elevated in hearts with dilated cardiomyopathy.

The protein resides in the cell membrane. It localises to the basolateral cell membrane. Its subcellular location is the cell junction. The protein localises to the tight junction. It is found in the adherens junction. The protein resides in the secreted. Functionally, component of the epithelial apical junction complex that may function as a homophilic cell adhesion molecule and is essential for tight junction integrity. Also involved in transepithelial migration of leukocytes through adhesive interactions with JAML a transmembrane protein of the plasma membrane of leukocytes. The interaction between both receptors also mediates the activation of gamma-delta T-cells, a subpopulation of T-cells residing in epithelia and involved in tissue homeostasis and repair. Upon epithelial CXADR-binding, JAML induces downstream cell signaling events in gamma-delta T-cells through PI3-kinase and MAP kinases. It results in proliferation and production of cytokines and growth factors by T-cells that in turn stimulate epithelial tissues repair. Its function is as follows. (Microbial infection) Acts as a receptor for adenovirus type C. (Microbial infection) Acts as a receptor for Coxsackievirus B1 to B6. The polypeptide is Coxsackievirus and adenovirus receptor (CXADR) (Homo sapiens (Human)).